The sequence spans 325 residues: Beta-ketoacyl-[acyl-carrier-protein] synthase III (325 aa).

Residues cysteine 119 and histidine 252 contribute to the active site. Residues 253–257 (QANIR) are ACP-binding. Residue asparagine 282 is part of the active site.

Belongs to the thiolase-like superfamily. FabH family. As to quaternary structure, homodimer.

The protein resides in the cytoplasm. It catalyses the reaction malonyl-[ACP] + acetyl-CoA + H(+) = 3-oxobutanoyl-[ACP] + CO2 + CoA. Its pathway is lipid metabolism; fatty acid biosynthesis. Its function is as follows. Catalyzes the condensation reaction of fatty acid synthesis by the addition to an acyl acceptor of two carbons from malonyl-ACP. Catalyzes the first condensation reaction which initiates fatty acid synthesis and may therefore play a role in governing the total rate of fatty acid production. Possesses both acetoacetyl-ACP synthase and acetyl transacylase activities. Its substrate specificity determines the biosynthesis of branched-chain and/or straight-chain of fatty acids. The chain is Beta-ketoacyl-[acyl-carrier-protein] synthase III from Delftia acidovorans (strain DSM 14801 / SPH-1).